A 104-amino-acid polypeptide reads, in one-letter code: MTFRPLHDRILVRRIEAEEKTAGGIIIPDTAKEKPQEGEVIAIGPGARDESGKLTPLDVKAGDRILFGKWSGTEIKLNGEDLLIMKESDVMGVIEQTATVKKAA.

Belongs to the GroES chaperonin family. In terms of assembly, heptamer of 7 subunits arranged in a ring. Interacts with the chaperonin GroEL.

It localises to the cytoplasm. Functionally, together with the chaperonin GroEL, plays an essential role in assisting protein folding. The GroEL-GroES system forms a nano-cage that allows encapsulation of the non-native substrate proteins and provides a physical environment optimized to promote and accelerate protein folding. GroES binds to the apical surface of the GroEL ring, thereby capping the opening of the GroEL channel. The polypeptide is Co-chaperonin GroES 2 (Mesorhizobium japonicum (strain LMG 29417 / CECT 9101 / MAFF 303099) (Mesorhizobium loti (strain MAFF 303099))).